The primary structure comprises 494 residues: UDP-glucose 6-dehydrogenase (494 aa).

Residues G11–G16, D36, R41, and V89–T93 each bind NAD(+). Positions S88 to E110 are disordered. Position 107 is an N6-acetyllysine (K107). Positions K129–R135 are allosteric switch region. Residue S130–V132 coordinates NAD(+). Residue E161 is the Proton donor/acceptor of the active site. Substrate contacts are provided by residues E161–E165, K220–N224, R260, and K267–G273. E165 lines the NAD(+) pocket. Catalysis depends on K220, which acts as the Proton donor/acceptor. The active-site Nucleophile is C276. C276–K279 contributes to the NAD(+) binding site. The segment at S321–T325 is important for formation of active hexamer structure. F338–K339 contributes to the substrate binding site. An NAD(+)-binding site is contributed by R346. R442 serves as a coordination point for substrate. The segment at V466–V494 is disordered. S476 is subject to Phosphoserine.

It belongs to the UDP-glucose/GDP-mannose dehydrogenase family. As to quaternary structure, homohexamer.

The catalysed reaction is UDP-alpha-D-glucose + 2 NAD(+) + H2O = UDP-alpha-D-glucuronate + 2 NADH + 3 H(+). The protein operates within nucleotide-sugar biosynthesis; UDP-alpha-D-glucuronate biosynthesis; UDP-alpha-D-glucuronate from UDP-alpha-D-glucose: step 1/1. With respect to regulation, UDP-alpha-D-xylose (UDX) acts as a feedback inhibitor. It binds at the same site as the substrate, but functions as allosteric inhibitor by triggering a conformation change that disrupts the active hexameric ring structure and gives rise to an inactive, horseshoe-shaped hexamer. Functionally, catalyzes the formation of UDP-alpha-D-glucuronate, a constituent of complex glycosaminoglycans. Required for the biosynthesis of chondroitin sulfate and heparan sulfate. Required for embryonic development via its role in the biosynthesis of glycosaminoglycans. Required for proper brain and neuronal development. The polypeptide is UDP-glucose 6-dehydrogenase (UGDH) (Bos taurus (Bovine)).